The following is a 239-amino-acid chain: Fatty acid metabolism regulator protein (239 aa).

Residues 6-74 (QSPAGFAEEY…HGKPTQVNNF (69 aa)) enclose the HTH gntR-type domain. Residues 34 to 53 (ERELSELIGVTRTTLREVLQ) constitute a DNA-binding region (H-T-H motif).

In terms of assembly, homodimer.

The protein localises to the cytoplasm. In terms of biological role, multifunctional regulator of fatty acid metabolism. In Edwardsiella ictaluri (strain 93-146), this protein is Fatty acid metabolism regulator protein.